A 179-amino-acid chain; its full sequence is MDLSFIIVQILSASYNNDVTALYTLINAYNSVDDTTRWAAINDPQAEVNVVKAYVATTATTELHRTILIDSIDSAFAYDQVGCLVGIARGLLRHSEDVLEVIKSMELFEVCRGKRGSKRYLGYLSDQCTNKYMMLTQAGLAAVEGADILRTNHLVSGNKFSPNFGIARMLLLTLCCGAL.

The protein is Protein P20B of Vitis vinifera (Grape).